A 72-amino-acid chain; its full sequence is Toxin Acra II-3 (72 aa).

The LCN-type CS-alpha/beta domain maps to 4-67 (PGNYPLDTRG…VWNAAKNYCK (64 aa)). Disulfide bonds link Cys18/Cys41, Cys27/Cys46, and Cys31/Cys48.

This sequence belongs to the long (3 C-C) scorpion toxin superfamily. Sodium channel inhibitor family. Beta subfamily. In terms of tissue distribution, expressed by the venom gland.

Its subcellular location is the secreted. Its function is as follows. Binds to sodium channels (Nav) and affects the channel activation process. This Androctonus crassicauda (Arabian fat-tailed scorpion) protein is Toxin Acra II-3.